The primary structure comprises 396 residues: S-adenosylmethionine synthase (396 aa).

ATP is bound at residue His16. Asp18 contributes to the Mg(2+) binding site. Position 44 (Glu44) interacts with K(+). L-methionine contacts are provided by Glu57 and Gln100. The interval 100-110 (QSPDIAQGVDR) is flexible loop. ATP contacts are provided by residues 167–169 (DAK), 232–233 (RF), Asp241, 247–248 (RK), Ala264, and Lys268. Asp241 serves as a coordination point for L-methionine. Lys272 contacts L-methionine.

Belongs to the AdoMet synthase family. In terms of assembly, homotetramer; dimer of dimers. Mg(2+) is required as a cofactor. K(+) serves as cofactor.

It localises to the cytoplasm. It carries out the reaction L-methionine + ATP + H2O = S-adenosyl-L-methionine + phosphate + diphosphate. It functions in the pathway amino-acid biosynthesis; S-adenosyl-L-methionine biosynthesis; S-adenosyl-L-methionine from L-methionine: step 1/1. In terms of biological role, catalyzes the formation of S-adenosylmethionine (AdoMet) from methionine and ATP. The overall synthetic reaction is composed of two sequential steps, AdoMet formation and the subsequent tripolyphosphate hydrolysis which occurs prior to release of AdoMet from the enzyme. The chain is S-adenosylmethionine synthase from Ralstonia pickettii (strain 12J).